Consider the following 642-residue polypeptide: tRNA uridine 5-carboxymethylaminomethyl modification enzyme MnmG (642 aa).

Residues 12–17 (GAGHAG), Val124, and Ser179 each bind FAD. 272–286 (GPRYCPSIEDKITRF) lines the NAD(+) pocket. FAD is bound at residue Gln369.

It belongs to the MnmG family. In terms of assembly, homodimer. Heterotetramer of two MnmE and two MnmG subunits. FAD serves as cofactor.

It localises to the cytoplasm. NAD-binding protein involved in the addition of a carboxymethylaminomethyl (cmnm) group at the wobble position (U34) of certain tRNAs, forming tRNA-cmnm(5)s(2)U34. This is tRNA uridine 5-carboxymethylaminomethyl modification enzyme MnmG from Bdellovibrio bacteriovorus (strain ATCC 15356 / DSM 50701 / NCIMB 9529 / HD100).